The following is a 144-amino-acid chain: Large ribosomal subunit protein uL15 (144 aa).

Over residues 1 to 13 (MVRERTKKLRGGH) the composition is skewed to basic residues. The interval 1 to 32 (MVRERTKKLRGGHYGRGFKAGRGKGKKGGSGN) is disordered.

Belongs to the universal ribosomal protein uL15 family. As to quaternary structure, part of the 50S ribosomal subunit.

Functionally, binds to the 23S rRNA. This is Large ribosomal subunit protein uL15 from Thermoplasma acidophilum (strain ATCC 25905 / DSM 1728 / JCM 9062 / NBRC 15155 / AMRC-C165).